Consider the following 65-residue polypeptide: Weak toxin CM-11 (65 aa).

Cystine bridges form between C3–C24, C6–C11, C17–C42, C46–C57, and C58–C63.

Belongs to the three-finger toxin family. Ancestral subfamily. Orphan group II sub-subfamily. Expressed by the venom gland.

It localises to the secreted. Functionally, binds with low affinity to muscular (alpha-1-beta-1-delta-epsilon/CHRNA1-CHRNB1-CHRND-CHRNE) and very low affinity to neuronal (alpha-7/CHRNA7) nicotinic acetylcholine receptor (nAChR). The chain is Weak toxin CM-11 from Naja haje haje (Egyptian cobra).